The sequence spans 188 residues: Myc target protein 1 (188 aa).

The helical transmembrane segment at 24–44 threads the bilayer; that stretch reads FTVSVAIGLAIGGFLWALFVF. A Bipartite nuclear localization signal motif is present at residues 47–65; that stretch reads RRRRASAPISQWSPTRRPR. 4 positions are modified to phosphoserine: S87, S90, S93, and S101.

This sequence belongs to the MYCT1 family. Highly expressed in lung, heart, and skeletal muscle. Expressed in brain, eye, liver, kidney, smooth muscle, pancreas, thyroid, thymus, submaxillary gland, spleen, testis, ovary, prostate, epididymis, and uterus. Deregulated expression promotes apoptosis in response to growth factor deprivation. Overexpression in synergy with CCNB1 may promote genomic instability.

It is found in the nucleus membrane. In terms of biological role, may regulate certain MYC target genes, MYC seems to be a direct upstream transcriptional activator. Does not seem to significantly affect growth cell capacity. Overexpression seems to mediate many of the known phenotypic features associated with MYC, including promotion of apoptosis, alteration of morphology, enhancement of anchorage-independent growth, tumorigenic conversion, promotion of genomic instability and inhibition of hematopoietic differentiation. This is Myc target protein 1 (Myct1) from Mus musculus (Mouse).